The chain runs to 2648 residues: E3 ubiquitin-protein ligase hecd-1 (2648 aa).

ANK repeat units follow at residues 374–403 (VGQS…DVNK) and 405–434 (HKSS…NPDL). Positions 433–455 (DLRDEDGKTALDKARERSDDDHN) are enriched in basic and acidic residues. Disordered stretches follow at residues 433-494 (DLRD…ELPN), 645-714 (PMEI…KATA), and 1376-1400 (DPPK…ALPP). Composition is skewed to polar residues over residues 478-489 (ASTSKQPGTSTK), 652-661 (NQPSSSTAVP), and 670-688 (TVPS…NPST). Composition is skewed to low complexity over residues 696 to 714 (SSTP…KATA) and 1383 to 1400 (PAGT…ALPP). Positions 1438-1510 (RSRGSYKISE…NFDIERVTST (73 aa)) constitute an MIB/HERC2 domain. Disordered stretches follow at residues 1538–1562 (YTPK…GSSR), 1575–1629 (KNTT…SLQH), 1652–1796 (NQEP…LLGG), and 1811–1836 (ESLS…GKKP). Low complexity-rich tracts occupy residues 1543 to 1562 (TGGP…GSSR) and 1575 to 1586 (KNTTPAGTPSSG). Over residues 1610-1629 (TSGPSVASTGQAASAESLQH) the composition is skewed to polar residues. Over residues 1653–1666 (QEPEDEPMGGEESD) the composition is skewed to acidic residues. Low complexity predominate over residues 1667-1696 (SAASMRSAASSNSQMSMGSSSQQQQQQDSD). Composition is skewed to acidic residues over residues 1736–1746 (TDGDADADETN) and 1756–1783 (DAME…DESS). The span at 1812-1823 (SLSDASSSAKDA) shows a compositional bias: low complexity. The region spanning 2240–2648 (FHADRKAVLE…AINEKGFHLN (409 aa)) is the HECT domain. Cysteine 2617 functions as the Glycyl thioester intermediate in the catalytic mechanism.

This sequence belongs to the UPL family. K-HECT subfamily. In terms of tissue distribution, expressed in most tissues, including hypodermis, muscle, intestine, vulva, and neurons.

The enzyme catalyses S-ubiquitinyl-[E2 ubiquitin-conjugating enzyme]-L-cysteine + [acceptor protein]-L-lysine = [E2 ubiquitin-conjugating enzyme]-L-cysteine + N(6)-ubiquitinyl-[acceptor protein]-L-lysine.. The protein operates within protein modification; protein ubiquitination. E3 ubiquitin-protein ligase which accepts ubiquitin from an E2 ubiquitin-conjugating enzyme in the form of a thioester and then directly transfers the ubiquitin to targeted substrates. Involved in the ubiquitination and proteasomal-mediated degradation of cytoplasmic and mitochondrial proteins. Positively regulates lin-12 activity in the anchor cell (AC)/vulval precursor (VU) cell fate decision. Negatively regulates glp-1 activity in germline proliferation. May play a role in the formation of fibrous organelles, a hemidesmosome-like structure attaching muscles to the epidermis. Regulates germline DNA double-strand-break repair and apoptosis in response to DNA damage by recruiting E4 ubiquitin-protein ligase ufd-2 to DNA repair foci. In Caenorhabditis elegans, this protein is E3 ubiquitin-protein ligase hecd-1.